We begin with the raw amino-acid sequence, 2406 residues long: Highly reducing polyketide synthase dmxL2 (2406 aa).

The 399-residue stretch at 1–399 (MEAFWSASKK…GTNAHAVLDD (399 aa)) folds into the Ketosynthase family 3 (KS3) domain. Cys130 is an active-site residue. Cys130 acts as the For beta-ketoacyl synthase activity in catalysis. Positions 414-476 (GHASNGTNGT…GPTDGPTSRP (63 aa)) are disordered. A compositionally biased stretch (polar residues) spans 417-448 (SNGTNGTLTNGHILNGEHTSNGMNGTLTNGHA). Residues 574 to 911 (FVFTGQGAQW…LAGSLFTQGY (338 aa)) are malonyl-CoA:ACP transacylase (MAT) domain. Ser665 acts as the For malonyltransferase activity in catalysis. The tract at residues 962-1096 (PSLLGSPSPS…GLLVIEYEAA (135 aa)) is N-terminal hotdog fold. The PKS/mFAS DH domain maps to 962 to 1278 (PSLLGSPSPS…CAEIAGASSN (317 aa)). The tract at residues 964–1273 (LLGSPSPSLA…IEGFLCAEIA (310 aa)) is dehydratase (DH) domain. The active-site Proton acceptor; for dehydratase activity is His994. The tract at residues 1124–1278 (VHRLDPSGFY…CAEIAGASSN (155 aa)) is C-terminal hotdog fold. Asp1189 (proton donor; for dehydratase activity) is an active-site residue. The interval 1694–2006 (GMLGSVCLEP…TGKHLGKIAL (313 aa)) is enoylreductase (ER) domain. The interval 2032 to 2210 (GVYLLVGGLG…TTVDLGIMRD (179 aa)) is ketoreductase (KR) domain. A Carrier domain is found at 2318–2395 (EASDSVLEAL…TFCNRIAAKS (78 aa)). At Ser2355 the chain carries O-(pantetheine 4'-phosphoryl)serine.

It participates in secondary metabolite biosynthesis. Functionally, highly reducing polyketide synthase; part of the gene cluster that mediates the biosynthesis of the dimeric xanthones cryptosporioptides. The pathway begins with the synthesis of atrochrysone thioester by the polyketide synthase dmx-nrPKS. The atrochrysone carboxyl ACP thioesterase dmxR1 then breaks the thioester bond and releases the atrochrysone carboxylic acid from dmx-nrPKS. Atrochrysone carboxylic acid is decarboxylated by the decarboxylase dmxR15, and oxidized by the anthrone oxygenase dmxR16 to yield emodin. Emodin is then reduced to emodin hydroquinone by the oxidoreductase dmxR7. A-ring reduction by the short chain dehydrogenase dmxR18, dehydration by the scytalone dehydratase-like protein dmxR17 and probable spontaneous re-oxidation, results in overall deoxygenation to chrysophanol. Baeyer-Villiger oxidation by the Baeyer-Villiger monooxygenase (BVMO) dmxR6 then yields monodictylactone in equilibrium with monodictyphenone. In the case of the cryptosporioptides biosynthesis, monodictylactone is reduced at C-12 to an alcohol (by the short chain dehydrogenases dmxR12 or dmxR8) and hydroxylated at C-5 by dmxR9, yielding the electron-rich aromatic which could eliminate H(2)O to form the ortho-quinonemethide, followed by tautomerisation to paraquinone and complete the formal reduction to produce the 10-methylgroup. Conjugate addition of C-4a-OH to the resulting paraquinone by the monooxygenase dmxR10 then gives cyclohexadienone, which is then reduced at C-5 by the short chain dehydrogenase dmxR3 to give the dihydroxanthone. The 6,7-epoxide in the cryptosporioptides could be introduced by the cytochrome P450 monooxygenase dmxL3. The highly reducing PKS dmxL2 manufactures butyrate, which is further carboxylated by dmxL1 to form ethylmalonate. It is not yet clear whether the carboxylation occurs while the butyrate is attached to the ACP of dmxL2, but this unusual fungal metabolite could then be esterified to O-5 by the O-acetyltransferase dmxR13. Finally, dimerization performed by dmxR5 gives the observed dimers cryptosporioptides A, B and C as the final products of the pathway. The protein is Highly reducing polyketide synthase dmxL2 of Cryptosporiopsis sp. (strain 8999).